A 542-amino-acid polypeptide reads, in one-letter code: Malolactic enzyme (542 aa).

Tyr92 (proton donor) is an active-site residue. Lys165 acts as the Proton acceptor in catalysis. Lys165 is a binding site for substrate. Positions 236, 237, and 260 each coordinate Mn(2+). Residues 293–296 (AGTA), Asn405, and Asn450 contribute to the NAD(+) site. Asn450 provides a ligand contact to substrate.

It belongs to the malic enzymes family. Homodimer. Mn(2+) is required as a cofactor. Requires NAD(+) as cofactor.

It catalyses the reaction (S)-malate + H(+) = (S)-lactate + CO2. Oxamate, fructose-1,6-diphosphate and L-lactate act as non-competitive inhibitors, whereas succinate, citrate and tartrate isomers produce a competitive inhibition. Functionally, involved in the malolactic fermentation (MLF) of wine, which results in a natural decrease in acidity and favorable changes in wine flavors. Catalyzes the decarboxylation of L-malate to L-lactate. The protein is Malolactic enzyme (mleS) of Leuconostoc mesenteroides.